A 914-amino-acid chain; its full sequence is Probable dipeptidyl-aminopeptidase B (914 aa).

The interval 1–82 (MGAEKRINDE…GLPPPSGAQR (82 aa)) is disordered. Over 1–88 (MGAEKRINDE…GAQRTPKKVS (88 aa)) the chain is Cytoplasmic. A compositionally biased stretch (low complexity) spans 26–38 (DSTSTASISLALI). A helical; Signal-anchor for type II membrane protein membrane pass occupies residues 89-109 (IIFWLVAALCVGGWLVAFFVF). Residues 110–914 (MGSPKKDSDK…RSLLKRMSNA (805 aa)) are Vacuolar-facing. 4 N-linked (GlcNAc...) asparagine glycosylation sites follow: Asn-128, Asn-295, Asn-347, and Asn-617. Ser-751 serves as the catalytic Charge relay system. Residue Asn-810 is glycosylated (N-linked (GlcNAc...) asparagine). Residues Asp-828 and His-861 each act as charge relay system in the active site. A glycan (N-linked (GlcNAc...) asparagine) is linked at Asn-897.

The protein belongs to the peptidase S9B family.

The protein resides in the vacuole membrane. It catalyses the reaction Release of an N-terminal dipeptide, Xaa-Yaa-|-Zaa-, from a polypeptide, preferentially when Yaa is Pro, provided Zaa is neither Pro nor hydroxyproline.. Functionally, type IV dipeptidyl-peptidase which removes N-terminal dipeptides sequentially from polypeptides having unsubstituted N-termini provided that the penultimate residue is proline. This Uncinocarpus reesii (strain UAMH 1704) protein is Probable dipeptidyl-aminopeptidase B (DAPB).